Here is a 239-residue protein sequence, read N- to C-terminus: tRNA (guanine-N(7)-)-methyltransferase (239 aa).

Positions 69, 94, 121, and 144 each coordinate S-adenosyl-L-methionine. Residue aspartate 144 is part of the active site. Lysine 148 provides a ligand contact to substrate. Positions 150–155 (RHNKRR) are interaction with RNA. Substrate contacts are provided by residues aspartate 180 and 217–220 (TKFE).

The protein belongs to the class I-like SAM-binding methyltransferase superfamily. TrmB family. As to quaternary structure, monomer.

It carries out the reaction guanosine(46) in tRNA + S-adenosyl-L-methionine = N(7)-methylguanosine(46) in tRNA + S-adenosyl-L-homocysteine. The protein operates within tRNA modification; N(7)-methylguanine-tRNA biosynthesis. Functionally, catalyzes the formation of N(7)-methylguanine at position 46 (m7G46) in tRNA. The chain is tRNA (guanine-N(7)-)-methyltransferase from Shigella boydii serotype 4 (strain Sb227).